The sequence spans 161 residues: Eukaryotic translation initiation factor 5A-1 (161 aa).

Lys-54 carries the post-translational modification Hypusine.

It belongs to the eIF-5A family. In terms of processing, lys-54 undergoes hypusination, a unique post-translational modification that consists in the addition of a butylamino group from spermidine to lysine side chain, leading to the formation of the unusual amino acid hypusine. eIF-5As are the only known proteins to undergo this modification, which is essential for their function. In terms of tissue distribution, expressed specifically in the germline in the distal region of gonads where germ cells actively proliferate.

It localises to the cytoplasm. Its function is as follows. Translation factor that promotes translation elongation and termination, particularly upon ribosome stalling at specific amino acid sequence contexts. Binds between the exit (E) and peptidyl (P) site of the ribosome and promotes rescue of stalled ribosome: specifically required for efficient translation of polyproline-containing peptides as well as other motifs that stall the ribosome. Acts as a ribosome quality control (RQC) cofactor by joining the RQC complex to facilitate peptidyl transfer during CAT tailing step. Required for mitotic germ cell proliferation, gametogenesis after entry into meiosis, and localization of the P granule component pgl-1 on P granules. The protein is Eukaryotic translation initiation factor 5A-1 (iff-1) of Caenorhabditis elegans.